A 416-amino-acid chain; its full sequence is Gamma-glutamyl phosphate reductase (416 aa).

The protein belongs to the gamma-glutamyl phosphate reductase family.

Its subcellular location is the cytoplasm. It carries out the reaction L-glutamate 5-semialdehyde + phosphate + NADP(+) = L-glutamyl 5-phosphate + NADPH + H(+). It participates in amino-acid biosynthesis; L-proline biosynthesis; L-glutamate 5-semialdehyde from L-glutamate: step 2/2. Its function is as follows. Catalyzes the NADPH-dependent reduction of L-glutamate 5-phosphate into L-glutamate 5-semialdehyde and phosphate. The product spontaneously undergoes cyclization to form 1-pyrroline-5-carboxylate. The protein is Gamma-glutamyl phosphate reductase of Vibrio vulnificus (strain CMCP6).